Here is a 767-residue protein sequence, read N- to C-terminus: Integrin beta-8 (767 aa).

An N-terminal signal peptide occupies residues 1–21 (MCGSALAFLTAALLSLHNCQR). At 22–681 (GPALVLGAAW…SECLSGPSYL (660 aa)) the chain is on the extracellular side. The PSI domain maps to 46 to 95 (RCGSANVVSCARCLQLGPECGWCVQEDFVSGGSGSERCDTVSSLISKGCP). 25 disulfide bridges follow: C47–C65, C55–C469, C58–C83, C68–C94, C211–C218, C266–C307, C407–C419, C439–C467, C471–C490, C471–C493, C481–C493, C498–C527, C510–C525, C519–C530, C532–C545, C552–C566, C560–C571, C573–C582, C584–C608, C592–C606, C600–C611, C613–C623, C626–C629, C633–C660, and C639–C656. Residues 146–384 (PVDLYYLVDV…NLVVEAYKKI (239 aa)) form the VWFA domain. D154 and S156 together coordinate Mg(2+). Residue D193 coordinates Ca(2+). The N-linked (GlcNAc...) asparagine glycan is linked to N233. Residues N249, D251, P253, and E254 each coordinate Ca(2+). A Mg(2+)-binding site is contributed by E254. N402 carries an N-linked (GlcNAc...) asparagine glycan. N-linked (GlcNAc...) asparagine glycosylation is found at N421, N431, and N456. I-EGF domains are found at residues 471 to 494 (CENHRGLKGQCAEAAPDPKCPQCD), 498 to 546 (CHFD…QYCE), 547 to 583 (KDDFSCPYLHGDVCAGHGECEGGRCQCFSGWEGDRCQ), and 584 to 624 (CPSA…RLCE). An N-linked (GlcNAc...) asparagine glycan is attached at N647. The helical transmembrane segment at 682–702 (RIFFIIFIVTFLIGLLKVLII) threads the bilayer. Topologically, residues 703–767 (RQVILQWNNN…NAQEAFRCNF (65 aa)) are cytoplasmic.

Belongs to the integrin beta chain family. As to quaternary structure, heterodimer of an alpha and a beta subunit. Beta-8 (ITGB8) associates with alpha-V (ITGAV) to form ITGAV:ITGB8. ITGAV:ITGB8 interacts with TGFB1.

The protein localises to the cell membrane. Functionally, integrin alpha-V:beta-8 (ITGAV:ITGB8) is a receptor for fibronectin. It recognizes the sequence R-G-D in its ligands. Integrin alpha-V:beta-6 (ITGAV:ITGB6) mediates R-G-D-dependent release of transforming growth factor beta-1 (TGF-beta-1) from regulatory Latency-associated peptide (LAP), thereby playing a key role in TGF-beta-1 activation on the surface of activated regulatory T-cells (Tregs). Required during vasculogenesis. This Mus musculus (Mouse) protein is Integrin beta-8.